Consider the following 157-residue polypeptide: Transcriptional repressor NrdR (157 aa).

A zinc finger spans residues 3-34; it reads CPSCQNTDSRVLESRSADAGKCVRRRRECLNC. Positions 49-139 constitute an ATP-cone domain; it reads VTVIKRSNAK…VYRQFNGIED (91 aa).

Belongs to the NrdR family. The cofactor is Zn(2+).

Functionally, negatively regulates transcription of bacterial ribonucleotide reductase nrd genes and operons by binding to NrdR-boxes. The sequence is that of Transcriptional repressor NrdR from Prochlorococcus marinus (strain SARG / CCMP1375 / SS120).